A 300-amino-acid polypeptide reads, in one-letter code: Ornithine carbamoyltransferase (300 aa).

Residues serine 49–threonine 52, glutamine 76, arginine 100, and histidine 127–glutamine 130 contribute to the carbamoyl phosphate site. L-ornithine contacts are provided by residues asparagine 158, aspartate 218, and serine 222–methionine 223. Carbamoyl phosphate contacts are provided by residues cysteine 258–leucine 259 and arginine 286.

It belongs to the aspartate/ornithine carbamoyltransferase superfamily. OTCase family.

Its subcellular location is the cytoplasm. The catalysed reaction is carbamoyl phosphate + L-ornithine = L-citrulline + phosphate + H(+). Its pathway is amino-acid biosynthesis; L-arginine biosynthesis; L-arginine from L-ornithine and carbamoyl phosphate: step 1/3. Reversibly catalyzes the transfer of the carbamoyl group from carbamoyl phosphate (CP) to the N(epsilon) atom of ornithine (ORN) to produce L-citrulline. The sequence is that of Ornithine carbamoyltransferase from Nitratidesulfovibrio vulgaris (strain ATCC 29579 / DSM 644 / CCUG 34227 / NCIMB 8303 / VKM B-1760 / Hildenborough) (Desulfovibrio vulgaris).